The chain runs to 130 residues: Small ribosomal subunit protein uS11c (130 aa).

It belongs to the universal ribosomal protein uS11 family. In terms of assembly, part of the 30S ribosomal subunit.

It is found in the plastid. It localises to the chloroplast. The protein is Small ribosomal subunit protein uS11c of Angiopteris evecta (Mule's foot fern).